Reading from the N-terminus, the 285-residue chain is Eukaryotic translation initiation factor 3 subunit F-2 (285 aa).

An MPN domain is found at 11 to 145 (VFLKPLVLFQ…TRLYCAVEMG (135 aa)).

Belongs to the eIF-3 subunit F family. Component of the eukaryotic translation initiation factor 3 (eIF-3) complex. The eIF-3 complex interacts with pix.

It is found in the cytoplasm. Its function is as follows. Component of the eukaryotic translation initiation factor 3 (eIF-3) complex, which is involved in protein synthesis of a specialized repertoire of mRNAs and, together with other initiation factors, stimulates binding of mRNA and methionyl-tRNAi to the 40S ribosome. The eIF-3 complex specifically targets and initiates translation of a subset of mRNAs involved in cell proliferation. The polypeptide is Eukaryotic translation initiation factor 3 subunit F-2 (Drosophila sechellia (Fruit fly)).